A 452-amino-acid polypeptide reads, in one-letter code: 1-aminocyclopropane-1-carboxylate synthase 3 (452 aa).

Lysine 283 is subject to N6-(pyridoxal phosphate)lysine.

Belongs to the class-I pyridoxal-phosphate-dependent aminotransferase family. Requires pyridoxal 5'-phosphate as cofactor. Expressed in leaves. Expressed in roots and leaf blades. Expressed at low levels in leaf sheaths and shoot bases.

It carries out the reaction S-adenosyl-L-methionine = 1-aminocyclopropane-1-carboxylate + S-methyl-5'-thioadenosine + H(+). It functions in the pathway alkene biosynthesis; ethylene biosynthesis via S-adenosyl-L-methionine; ethylene from S-adenosyl-L-methionine: step 1/2. In terms of biological role, catalyzes the formation of 1-aminocyclopropane-1-carboxylate, a direct precursor of ethylene in higher plants. This is 1-aminocyclopropane-1-carboxylate synthase 3 from Oryza sativa subsp. japonica (Rice).